Here is a 288-residue protein sequence, read N- to C-terminus: Mortality factor 4-like protein 2 (288 aa).

Positions M1–S15 are enriched in polar residues. A disordered region spans residues M1 to F115. A Phosphoserine modification is found at S71. Positions S117 to L288 constitute an MRG domain.

In terms of assembly, component of the NuA4 histone acetyltransferase complex which contains the catalytic subunit KAT5/TIP60 and the subunits EP400, TRRAP/PAF400, BRD8/SMAP, EPC1, DMAP1/DNMAP1, RUVBL1/TIP49, RUVBL2, ING3, actin, ACTL6A/BAF53A, MORF4L1/MRG15, MORF4L2/MRGX, MRGBP, YEATS4/GAS41 and VPS72/YL1. The NuA4 complex interacts with MYC and the adenovirus E1A protein. MORF4L1 may also participate in the formation of NuA4 related complexes which lack the KAT5/TIP60 catalytic subunit, but which include the SWI/SNF related protein SRCAP. Component of the MSIN3A histone deacetylase complex, which includes SIN3A, HDAC2, ARID4B, MORF4L1, RBBP4/RbAp48, and RBBP7/RbAp46. Interacts with MRFAP1 and RB1. May also interact with one or more as yet undefined members of the TLE (transducin-like enhancer of split) family of transcriptional repressors.

The protein resides in the nucleus. Component of the NuA4 histone acetyltransferase complex which is involved in transcriptional activation of select genes principally by acetylation of nucleosomal histone H4 and H2A. This modification may both alter nucleosome - DNA interactions and promote interaction of the modified histones with other proteins which positively regulate transcription. This complex may be required for the activation of transcriptional programs associated with oncogene and proto-oncogene mediated growth induction, tumor suppressor mediated growth arrest and replicative senescence, apoptosis, and DNA repair. The NuA4 complex ATPase and helicase activities seem to be, at least in part, contributed by the association of RUVBL1 and RUVBL2 with EP400. NuA4 may also play a direct role in DNA repair when directly recruited to sites of DNA damage. Also a component of the MSIN3A complex which acts to repress transcription by deacetylation of nucleosomal histones. This is Mortality factor 4-like protein 2 (Morf4l2) from Mus musculus (Mouse).